The following is a 427-amino-acid chain: MNFDVVIIGGGLAGLTCGVALQEQGKRCVIINNGQAAIDFSSGSMDLLSRLPSGEFVADFYKSYATFAKQLPQHPYSLLGKEKVLAKATQFEQLATSLKLDLVGSTAQNHLRVTPLGGLRGAWLSPNSVPTVKGSEPFPHKTIAILGIEGYHDFQPQLLADNLKQNPQFTHCELSTGYLNIPELDQLRNNAREFRSVNIAQVLEHKLAFRDLVAEIKTATKGAEAIFLPACFGLDDQSFFNQLQQAVEATIFELPTLPPSLLGIRQHKQLRHRFERLGGLMLNGDRALKADIENGKVQRIYTQLHQDNAISAEHLVLATGSYFSNGLKADFDRIFEPVFQADIVGCKDFNETDRLSWTANRFSSPQPYQSAGVAINEKCQVRKDGQFMANLYATGNVIGGFNSLELGCGSGVAVVTALAVAEEIVGA.

This sequence belongs to the anaerobic G-3-P dehydrogenase subunit B family. In terms of assembly, composed of a catalytic GlpA/B dimer and of membrane bound GlpC. FMN serves as cofactor.

The enzyme catalyses a quinone + sn-glycerol 3-phosphate = dihydroxyacetone phosphate + a quinol. The protein operates within polyol metabolism; glycerol degradation via glycerol kinase pathway; glycerone phosphate from sn-glycerol 3-phosphate (anaerobic route): step 1/1. In terms of biological role, conversion of glycerol 3-phosphate to dihydroxyacetone. Uses fumarate or nitrate as electron acceptor. The polypeptide is Anaerobic glycerol-3-phosphate dehydrogenase subunit B (Glaesserella parasuis serovar 5 (strain SH0165) (Haemophilus parasuis)).